Reading from the N-terminus, the 306-residue chain is UDP-N-acetylenolpyruvoylglucosamine reductase (306 aa).

An FAD-binding PCMH-type domain is found at 30–216 (RIGGPVPYIL…KSKLIDFSTR (187 aa)). Residue Arg180 is part of the active site. The active-site Proton donor is the Ser230. Residue Glu301 is part of the active site.

This sequence belongs to the MurB family. FAD serves as cofactor.

It localises to the cytoplasm. It carries out the reaction UDP-N-acetyl-alpha-D-muramate + NADP(+) = UDP-N-acetyl-3-O-(1-carboxyvinyl)-alpha-D-glucosamine + NADPH + H(+). It participates in cell wall biogenesis; peptidoglycan biosynthesis. Its function is as follows. Cell wall formation. In Petrotoga mobilis (strain DSM 10674 / SJ95), this protein is UDP-N-acetylenolpyruvoylglucosamine reductase.